Consider the following 1203-residue polypeptide: Plasma membrane calcium-transporting ATPase 4 (1203 aa).

Residues 1-92 (MTNPSGHNLP…NMIPPKKPKT (92 aa)) lie on the Cytoplasmic side of the membrane. A Phosphoserine modification is found at Ser-13. A helical membrane pass occupies residues 93-113 (FLELVWEALQDVTLIILEIAA). The Extracellular portion of the chain corresponds to 114–150 (IISLVLSFYRPPGGENEICGHIVSNPEEDEEGETGWI). The helical transmembrane segment at 151–171 (EGAAILASVIIVVFVTAFNDW) threads the bilayer. Topologically, residues 172–356 (SKEKQFRGLQ…KEKSVLQGKL (185 aa)) are cytoplasmic. Positions 294 to 319 (DDEKKKKGKKQGVSENRNKAKTQDGV) are disordered. A phosphoserine mark is found at Ser-328 and Ser-334. The disordered stretch occupies residues 330–349 (EGLDSEEKEKKASKGPKKEK). Residues 334-349 (SEEKEKKASKGPKKEK) are compositionally biased toward basic and acidic residues. A helical transmembrane segment spans residues 357-376 (TRLAVQIGKAGLIMSILTVL). Topologically, residues 377 to 409 (ILILYFVVDNFVIQRRAWLPECTPVYIQYFVKF) are extracellular. A helical membrane pass occupies residues 410 to 427 (FIIGVTVLVVAVPEGLPL). The Cytoplasmic portion of the chain corresponds to 428 to 840 (AVTISLAYSV…MWGRNVYDSI (413 aa)). Catalysis depends on Asp-465, which acts as the 4-aspartylphosphate intermediate. Residues Asp-785 and Asp-789 each contribute to the Mg(2+) site. A helical transmembrane segment spans residues 841-860 (SKFLQFQLTVNVVAVIVAFS). Over 861–870 (GACITQDSPL) the chain is Extracellular. Residues 871–891 (KAVQMLWVNLIMDTFASLALA) form a helical membrane-spanning segment. Residues 892-911 (TEPPTDSLLRRRPYGRNKPL) lie on the Cytoplasmic side of the membrane. Residues 912 to 934 (ISRTMMKNILGHAVYQLGIVFLL) traverse the membrane as a helical segment. The Extracellular segment spans residues 935–952 (VFAGDKLFDIDSGRKAPL). The helical transmembrane segment at 953-974 (NSPPSQHYTIVFNTFVLMQLFN) threads the bilayer. Residues 975–993 (EINSRKIHGEKNVFAGVYR) are Cytoplasmic-facing. A helical transmembrane segment spans residues 994 to 1015 (NIIFCSVVLGTFFCQILIVEVG). Topologically, residues 1016–1025 (GKPFSCTNLT) are extracellular. The chain crosses the membrane as a helical span at residues 1026–1047 (MEQWMWCLFIGIGELLWGQVIS). At 1048–1203 (AIPTKSLKFL…SPLQSQETPV (156 aa)) the chain is on the cytoplasmic side. A phosphoserine mark is found at Ser-1064 and Ser-1070. Residues 1086–1103 (LRRGQILWVRGLNRIQTQ) are calmodulin-binding subdomain A. Thr-1102 is subject to Phosphothreonine; by PKC. Gln-1103 bears the Phosphoserine mark. A calmodulin-binding subdomain B region spans residues 1104 to 1113 (IRVVKVFHSF). Arg-1114, Asp-1115, Ile-1126, and Ser-1144 each carry phosphoserine.

It belongs to the cation transport ATPase (P-type) (TC 3.A.3) family. Type IIB subfamily. Interacts with PDZD11. Interacts with SLC35G1 and STIM1. Interacts with calmodulin. In terms of tissue distribution, ubiquitously expressed. Not detected in liver. The highest levels are found in uterus and stomach. Isoform XA is found in uterus, brain, stomach, small intestine, colon and pancreas. Isoform XB is found in uterus, skeletal muscle, lung, kidney, spleen, stomach, small intestine and pancreas. Isoform ZA is found in testis and isoform ZB is found in testis and heart.

It is found in the cell membrane. Its subcellular location is the cell projection. The protein resides in the cilium. It localises to the flagellum membrane. The enzyme catalyses Ca(2+)(in) + ATP + H2O = Ca(2+)(out) + ADP + phosphate + H(+). Activated by calcium/calmodulin. Calcium/calmodulin-regulated and magnesium-dependent enzyme that catalyzes the hydrolysis of ATP coupled with the transport of calcium out of the cell. By regulating sperm cell calcium homeostasis, may play a role in sperm motility. In Rattus norvegicus (Rat), this protein is Plasma membrane calcium-transporting ATPase 4.